A 105-amino-acid chain; its full sequence is UPF0145 protein LPC_0273 (105 aa).

The protein belongs to the UPF0145 family.

This chain is UPF0145 protein LPC_0273, found in Legionella pneumophila (strain Corby).